A 389-amino-acid polypeptide reads, in one-letter code: MIPGKGRYFFTSESVTEGHPDKVADQISDAVLDVLLAQDPMSRVACETLVTTGMAFIAGEIRTKGFADLPEVVRSTIRNIGYNSSEMGFDWKTCAVISSIDKQSGDIAQGVDRGNPEDQGAGDQGMMFGFACDETPTLMPAPIYWAHQLSQRLTQVRKDGILDFLRPDGKTQVSFEYVDGKPVHINNVVVSSQHADNVSNDTIREGIIEEVIRKTLPEGLMADDCEIFINTTGRFVIGGPMGDCGLTGRKIIQDTYGGAGHHGGGAFSGKDASKVDRSGAYMGRYIAKNVVKAGLAPKCEVQIAYCIGVAEPVSVLVSSLGSSELSDEVLTRAVREVFDLRPYHIIKRLDLNRPIYGKTTCYGHFGRELPEFTWEQCDAVADLRTAAKI.

H19 serves as a coordination point for ATP. D21 contributes to the Mg(2+) binding site. E47 is a binding site for K(+). Positions 60 and 103 each coordinate L-methionine. The interval 103–113 is flexible loop; sequence QSGDIAQGVDR. ATP contacts are provided by residues 168–170, 234–235, D243, 249–250, A266, and K270; these read DGK, RF, and RK. D243 contacts L-methionine. K274 serves as a coordination point for L-methionine.

This sequence belongs to the AdoMet synthase family. In terms of assembly, homotetramer; dimer of dimers. It depends on Mg(2+) as a cofactor. Requires K(+) as cofactor.

Its subcellular location is the cytoplasm. It carries out the reaction L-methionine + ATP + H2O = S-adenosyl-L-methionine + phosphate + diphosphate. It participates in amino-acid biosynthesis; S-adenosyl-L-methionine biosynthesis; S-adenosyl-L-methionine from L-methionine: step 1/1. Functionally, catalyzes the formation of S-adenosylmethionine (AdoMet) from methionine and ATP. The overall synthetic reaction is composed of two sequential steps, AdoMet formation and the subsequent tripolyphosphate hydrolysis which occurs prior to release of AdoMet from the enzyme. In Nitratidesulfovibrio vulgaris (strain DSM 19637 / Miyazaki F) (Desulfovibrio vulgaris), this protein is S-adenosylmethionine synthase.